We begin with the raw amino-acid sequence, 676 residues long: SPARC-like protein 1 (676 aa).

The first 16 residues, 1 to 16 (MKTVLLLICLLGSAFT), serve as a signal peptide directing secretion. Positions 35–44 (EKHKYTHSEM) are enriched in basic and acidic residues. 3 disordered regions span residues 35–151 (EKHK…WALR), 173–369 (NTVG…GVYR), and 385–437 (SEDN…RNST). Positions 95–108 (KNSLRSINFLTLHS) are enriched in polar residues. Residue N182 is glycosylated (N-linked (GlcNAc...) asparagine). Acidic residues predominate over residues 184–202 (SEEEEAGEEEDEEWGEETD). 2 stretches are compositionally biased toward basic and acidic residues: residues 249–266 (EKFS…KEGK) and 273–291 (NHNE…KEHF). Over residues 312–328 (NAEEDDNDSGDDGEEDL) the composition is skewed to acidic residues. N-linked (GlcNAc...) asparagine glycosylation is present at N318. A compositionally biased stretch (basic and acidic residues) spans 385–394 (SEDNHYHHEP). N-linked (GlcNAc...) asparagine glycosylation is present at N396. The segment covering 397–408 (SSSKQQLQTSSS) has biased composition (low complexity). The N-linked (GlcNAc...) asparagine glycan is linked to N413. Residues 415–433 (TEHEDEVKTTGGSYHEESA) show a composition bias toward basic and acidic residues. N435 carries N-linked (GlcNAc...) asparagine glycosylation. Positions 444–466 (LCRNFHCKRGKVCQADKQGKPSC) constitute a Follistatin-like domain. Intrachain disulfides connect C445–C456, C450–C466, C468–C502, C474–C495, C484–C521, C527–C638, and C646–C662. A Kazal-like domain is found at 462–523 (GKPSCICQDP…HLDYMGACKH (62 aa)). N-linked (GlcNAc...) asparagine glycosylation occurs at N488. An EF-hand domain is found at 634–669 (PMEHCITRFFQECDGDQDKLITLKEWCHCFAIKEED). Ca(2+)-binding residues include D647, D649, D651, and E658.

This sequence belongs to the SPARC family. In terms of tissue distribution, glial (Mueller) cells of the neuroretina.

It localises to the secreted. It is found in the extracellular space. The protein resides in the extracellular matrix. In terms of biological role, could play a role in the late stage of neuroretina morphogenesis. The protein is SPARC-like protein 1 (SPARCL1) of Coturnix japonica (Japanese quail).